Consider the following 318-residue polypeptide: tRNA uridine(34) hydroxylase (318 aa).

The Rhodanese domain occupies 123–217 (EDDDTVIIDA…YGKDPETKGE (95 aa)). Residue cysteine 177 is the Cysteine persulfide intermediate of the active site.

It belongs to the TrhO family.

It carries out the reaction uridine(34) in tRNA + AH2 + O2 = 5-hydroxyuridine(34) in tRNA + A + H2O. Its function is as follows. Catalyzes oxygen-dependent 5-hydroxyuridine (ho5U) modification at position 34 in tRNAs. The protein is tRNA uridine(34) hydroxylase of Staphylococcus aureus (strain USA300).